A 115-amino-acid chain; its full sequence is uncharacterized protein (115 aa).

Residues Arg-1 to Arg-86 are disordered.

This is an uncharacterized protein from Homo sapiens (Human).